The primary structure comprises 89 residues: Small ribosomal subunit protein uS15 (89 aa).

This sequence belongs to the universal ribosomal protein uS15 family. In terms of assembly, part of the 30S ribosomal subunit. Forms a bridge to the 50S subunit in the 70S ribosome, contacting the 23S rRNA.

One of the primary rRNA binding proteins, it binds directly to 16S rRNA where it helps nucleate assembly of the platform of the 30S subunit by binding and bridging several RNA helices of the 16S rRNA. Its function is as follows. Forms an intersubunit bridge (bridge B4) with the 23S rRNA of the 50S subunit in the ribosome. This chain is Small ribosomal subunit protein uS15, found in Methylobacterium nodulans (strain LMG 21967 / CNCM I-2342 / ORS 2060).